The following is a 73-amino-acid chain: Translation initiation factor IF-1 1 (73 aa).

Positions 1–72 constitute an S1-like domain; sequence MAKEELIEFG…TKGRINFRHK (72 aa).

It belongs to the IF-1 family. As to quaternary structure, component of the 30S ribosomal translation pre-initiation complex which assembles on the 30S ribosome in the order IF-2 and IF-3, IF-1 and N-formylmethionyl-tRNA(fMet); mRNA recruitment can occur at any time during PIC assembly.

Its subcellular location is the cytoplasm. Its function is as follows. One of the essential components for the initiation of protein synthesis. Stabilizes the binding of IF-2 and IF-3 on the 30S subunit to which N-formylmethionyl-tRNA(fMet) subsequently binds. Helps modulate mRNA selection, yielding the 30S pre-initiation complex (PIC). Upon addition of the 50S ribosomal subunit IF-1, IF-2 and IF-3 are released leaving the mature 70S translation initiation complex. The sequence is that of Translation initiation factor IF-1 1 from Cupriavidus pinatubonensis (strain JMP 134 / LMG 1197) (Cupriavidus necator (strain JMP 134)).